A 593-amino-acid chain; its full sequence is ESX-1 secretion system protein EccCb1 (593 aa).

2 consecutive FtsK domains span residues 66 to 260 (RQEV…NETQ) and 350 to 546 (QVPL…EKND). ATP is bound by residues 85–92 (GAPQTGKS) and 377–384 (GAPKSGKT).

As to quaternary structure, part of the ESX-1 / type VII secretion system (T7SS), which is composed of cytosolic and membrane components. The ESX-1 membrane complex is composed of EccB1, EccCa1, EccCb1, EccD1 and EccE1.

It localises to the cytoplasm. Part of the ESX-1 / type VII specialized secretion system (T7SS), which exports several proteins including EsxA and EsxB. Plays a role in DNA conjugation, in both donor and recipient strains. The polypeptide is ESX-1 secretion system protein EccCb1 (eccCb1) (Mycolicibacterium smegmatis (strain MKD8) (Mycobacterium smegmatis)).